A 158-amino-acid polypeptide reads, in one-letter code: Cyclic pyranopterin monophosphate synthase (158 aa).

Residues 75–77 and 113–114 each bind substrate; these read LCH and ME. The active site involves aspartate 128.

This sequence belongs to the MoaC family. In terms of assembly, homohexamer; trimer of dimers.

It catalyses the reaction (8S)-3',8-cyclo-7,8-dihydroguanosine 5'-triphosphate = cyclic pyranopterin phosphate + diphosphate. It participates in cofactor biosynthesis; molybdopterin biosynthesis. Its function is as follows. Catalyzes the conversion of (8S)-3',8-cyclo-7,8-dihydroguanosine 5'-triphosphate to cyclic pyranopterin monophosphate (cPMP). The protein is Cyclic pyranopterin monophosphate synthase of Roseiflexus castenholzii (strain DSM 13941 / HLO8).